A 317-amino-acid chain; its full sequence is Chitin synthase export chaperone (317 aa).

Transmembrane regions (helical) follow at residues 63-83, 101-121, 133-153, 164-184, 204-224, 236-256, and 266-286; these read IFEI…IIII, FFQT…GVSA, VQLG…LLGF, MLLL…VSIV, FTVM…CLLI, TGAI…IYAF, and HYLD…MMLY.

The protein belongs to the CHS7 family. In terms of assembly, interacts with CHS3.

The protein localises to the endoplasmic reticulum membrane. Functionally, chaperone required for the export of the chitin synthase CHS3 from the endoplasmic reticulum. This chain is Chitin synthase export chaperone (CHS7), found in Kluyveromyces lactis (strain ATCC 8585 / CBS 2359 / DSM 70799 / NBRC 1267 / NRRL Y-1140 / WM37) (Yeast).